The sequence spans 173 residues: Ribosome maturation factor RimM (173 aa).

Residues 96 to 169 (PDEYYDHQLE…LVEIDPPEGL (74 aa)) enclose the PRC barrel domain.

The protein belongs to the RimM family. Binds ribosomal protein uS19.

It localises to the cytoplasm. In terms of biological role, an accessory protein needed during the final step in the assembly of 30S ribosomal subunit, possibly for assembly of the head region. Essential for efficient processing of 16S rRNA. May be needed both before and after RbfA during the maturation of 16S rRNA. It has affinity for free ribosomal 30S subunits but not for 70S ribosomes. This Mycobacterium sp. (strain JLS) protein is Ribosome maturation factor RimM.